The following is a 430-amino-acid chain: Palmitoyltransferase ZDHHC11 (430 aa).

Topologically, residues 1 to 46 are cytoplasmic; it reads MTNLNCFGRHRRRTAPHNATGSRSELVAPPIHSRINGWSSPLHSFQ. Residues 47–67 form a helical membrane-spanning segment; it reads FIALLIFSFMAIVAFGIYVPL. The Lumenal portion of the chain corresponds to 68 to 76; it reads LPAPWSYAA. The chain crosses the membrane as a helical span at residues 77 to 97; that stretch reads YALIGSAFVLHLFSHVTAVTI. At 98 to 176 the chain is on the cytoplasmic side; the sequence is DPADVNVRRR…GGRNYWFFFT (79 aa). Residues 129 to 179 form the DHHC domain; sequence LHCTLCEVDVSPKAKHCSTCNKCIADFDHHCKWLNNCVGGRNYWFFFTAVS. Cysteine 159 acts as the S-palmitoyl cysteine intermediate in catalysis. Residues 177 to 197 form a helical membrane-spanning segment; that stretch reads AVSSAVIGVILLIPLVLFVFI. At 198 to 234 the chain is on the lumenal side; sequence EHYVNPAVLRTAPQFQTVKGNGTWLVFLPVAPVETSS. A helical membrane pass occupies residues 235–255; it reads ISLLVVSFITALLSLAALLLL. Topologically, residues 256–430 are cytoplasmic; sequence CHLLCFHIYL…QYLHFKQKMP (175 aa).

It belongs to the DHHC palmitoyltransferase family.

It is found in the endoplasmic reticulum membrane. The catalysed reaction is L-cysteinyl-[protein] + hexadecanoyl-CoA = S-hexadecanoyl-L-cysteinyl-[protein] + CoA. Functionally, endoplasmic reticulum-localized palmitoyltransferase that could catalyze the addition of palmitate onto protein substrates. The chain is Palmitoyltransferase ZDHHC11 from Danio rerio (Zebrafish).